Here is a 433-residue protein sequence, read N- to C-terminus: Serine/threonine-protein phosphatase 2A activator 2 (433 aa).

The span at 1 to 10 shows a compositional bias: pro residues; the sequence is MTSQAPPQPA. Disordered regions lie at residues 1 to 67 and 367 to 400; these read MTSQ…NWTF and SMSE…GTGW. A compositionally biased stretch (low complexity) spans 11 to 23; sequence SSPGVAAPAAASS. Residues 45–59 are compositionally biased toward pro residues; it reads NPTPIPETPALPTPP. Residues 367 to 382 show a composition bias toward acidic residues; the sequence is SMSEDTGAGDEADVED. The span at 383-396 shows a compositional bias: basic and acidic residues; sequence DPHAGHDHTGKAHD.

Belongs to the PTPA-type PPIase family.

The protein localises to the cytoplasm. It catalyses the reaction [protein]-peptidylproline (omega=180) = [protein]-peptidylproline (omega=0). PPIases accelerate the folding of proteins. It catalyzes the cis-trans isomerization of proline imidic peptide bonds in oligopeptides. Acts as a regulatory subunit for PP2A-like phosphatases modulating their activity or substrate specificity, probably by inducing a conformational change in the catalytic subunit, a direct target of the PPIase. Can reactivate inactive phosphatase PP2A-phosphatase methylesterase complexes (PP2Ai) in presence of ATP and Mg(2+) by dissociating the inactive form from the complex. The polypeptide is Serine/threonine-protein phosphatase 2A activator 2 (RRD2) (Gibberella zeae (strain ATCC MYA-4620 / CBS 123657 / FGSC 9075 / NRRL 31084 / PH-1) (Wheat head blight fungus)).